A 548-amino-acid chain; its full sequence is CTP synthase (548 aa).

The amidoligase domain stretch occupies residues 1–270 (MTKYVFVTGG…DNIVCEALGL (270 aa)). S13 lines the CTP pocket. S13 serves as a coordination point for UTP. Residues 14–19 (SLGKGI) and D71 each bind ATP. Residues D71 and E144 each coordinate Mg(2+). Residues 151 to 153 (DIE), 191 to 196 (KTKPTQ), and K227 each bind CTP. Residues 191-196 (KTKPTQ) and K227 contribute to the UTP site. A Glutamine amidotransferase type-1 domain is found at 295–545 (TIGMVGKYVD…IEAAIANHAR (251 aa)). G356 lines the L-glutamine pocket. C383 functions as the Nucleophile; for glutamine hydrolysis in the catalytic mechanism. Residues 384-387 (LGMQ), E407, and R473 each bind L-glutamine. Residues H518 and E520 contribute to the active site.

Belongs to the CTP synthase family. Homotetramer.

The enzyme catalyses UTP + L-glutamine + ATP + H2O = CTP + L-glutamate + ADP + phosphate + 2 H(+). The catalysed reaction is L-glutamine + H2O = L-glutamate + NH4(+). It carries out the reaction UTP + NH4(+) + ATP = CTP + ADP + phosphate + 2 H(+). Its pathway is pyrimidine metabolism; CTP biosynthesis via de novo pathway; CTP from UDP: step 2/2. Allosterically activated by GTP, when glutamine is the substrate; GTP has no effect on the reaction when ammonia is the substrate. The allosteric effector GTP functions by stabilizing the protein conformation that binds the tetrahedral intermediate(s) formed during glutamine hydrolysis. Inhibited by the product CTP, via allosteric rather than competitive inhibition. In terms of biological role, catalyzes the ATP-dependent amination of UTP to CTP with either L-glutamine or ammonia as the source of nitrogen. Regulates intracellular CTP levels through interactions with the four ribonucleotide triphosphates. This Bordetella petrii (strain ATCC BAA-461 / DSM 12804 / CCUG 43448) protein is CTP synthase.